The sequence spans 149 residues: Large ribosomal subunit protein bL9 (149 aa).

It belongs to the bacterial ribosomal protein bL9 family.

Binds to the 23S rRNA. In Cutibacterium acnes (strain DSM 16379 / KPA171202) (Propionibacterium acnes), this protein is Large ribosomal subunit protein bL9.